The following is a 348-amino-acid chain: Replication-associated protein (348 aa).

The segment covering 1 to 17 (MRAPASSAASNRPGPSN) has biased composition (low complexity). The interval 1 to 22 (MRAPASSAASNRPGPSNHPTPR) is disordered. Residues 22 to 125 (RWNSKQFFLT…NGDSDEMGEL (104 aa)) enclose the CRESS-DNA virus Rep endonuclease domain. An RCR-1 motif is present at residues 29–32 (FLTY). 3 residues coordinate a divalent metal cation: Glu63, His71, and His73. The RCR-2 motif lies at 71–73 (HLH). The active-site For DNA cleavage activity is the Tyr111. Positions 111–114 (YISK) match the RCR-3 motif. The segment at 176 to 188 (SAAALFTEPPPVY) is oligomerization. 228–235 (GPSRTGKT) is an ATP binding site. The interval 251–269 (VDFTHYDKDAIYNVIDDVP) is transactivation. A Nuclear localization signal motif is present at residues 291–301 (KYGKKKKIPGG).

Belongs to the geminiviridae Rep protein family. Homooligomer. Rep binds to repeated DNA motifs (iterons). Forms the O-complex, which is a Rep-DNA complex involved in the initiation of RCR. Part of the C- and V-complexes which are RepA-Rep-DNA complexes involved in the c-sense and v-sense transcription. The cofactor is Mg(2+). It depends on Mn(2+) as a cofactor.

It is found in the host nucleus. Functionally, essential for the replication of viral ssDNA. The closed circular ssDNA genome is first converted to a superhelical dsDNA. Rep binds a specific region at the genome origin of replication. It introduces an endonucleolytic nick within the conserved sequence 5'-TAATATTAC-3' in the intergenic region of the genome present in all geminiviruses, thereby initiating the rolling circle replication (RCR). Following cleavage, binds covalently to the 5'-phosphate of DNA as a tyrosyl ester. The cleavage gives rise to a free 3'-OH that serves as a primer for the cellular DNA polymerase. The polymerase synthesizes the (+) strand DNA by rolling circle mechanism. After one round of replication, a Rep-catalyzed nucleotidyl transfer reaction releases a circular single-stranded virus genome, thereby terminating the replication. Displays origin-specific DNA cleavage, nucleotidyl transferase, ATPase and helicase activities. Acts as an inhibitor of C-sense gene transcription. This is Replication-associated protein from Miscanthus streak virus (isolate 91) (MiSV).